Consider the following 71-residue polypeptide: Large ribosomal subunit protein bL31 (71 aa).

Zn(2+) contacts are provided by cysteine 16, cysteine 18, cysteine 37, and cysteine 40.

It belongs to the bacterial ribosomal protein bL31 family. Type A subfamily. Part of the 50S ribosomal subunit. Requires Zn(2+) as cofactor.

Binds the 23S rRNA. The sequence is that of Large ribosomal subunit protein bL31 from Chromohalobacter salexigens (strain ATCC BAA-138 / DSM 3043 / CIP 106854 / NCIMB 13768 / 1H11).